The chain runs to 150 residues: Deoxyuridine 5'-triphosphate nucleotidohydrolase (150 aa).

Substrate is bound by residues 65–67 (RSG), asparagine 78, and 82–84 (TID). The segment at 130-150 (LSDTERGEGGFGHTGVASKAE) is disordered.

The protein belongs to the dUTPase family. Mg(2+) is required as a cofactor.

It catalyses the reaction dUTP + H2O = dUMP + diphosphate + H(+). Its pathway is pyrimidine metabolism; dUMP biosynthesis; dUMP from dCTP (dUTP route): step 2/2. In terms of biological role, this enzyme is involved in nucleotide metabolism: it produces dUMP, the immediate precursor of thymidine nucleotides and it decreases the intracellular concentration of dUTP so that uracil cannot be incorporated into DNA. This Chlorobaculum parvum (strain DSM 263 / NCIMB 8327) (Chlorobium vibrioforme subsp. thiosulfatophilum) protein is Deoxyuridine 5'-triphosphate nucleotidohydrolase.